The chain runs to 308 residues: Taste receptor type 2 member 10 (308 aa).

Residues 1–6 (MLSVVE) lie on the Extracellular side of the membrane. The helical transmembrane segment at 7 to 27 (GIFIFVVISESVFGVLGNGFI) threads the bilayer. Over 28–42 (GLVNCIDCAKNKLST) the chain is Cytoplasmic. A helical transmembrane segment spans residues 43–63 (IGFILTGLAISRIFLIWVIIT). Residues 64 to 100 (DGFIQIFSPDIYASGNLIEYISYIWVIGNQSSMWFAT) are Extracellular-facing. The N-linked (GlcNAc...) asparagine glycan is linked to Asn-92. The helical transmembrane segment at 101–121 (SLSIFYFLKIANFSNYIFLWL) threads the bilayer. Topologically, residues 122–126 (KSRTN) are cytoplasmic. Residues 127–147 (MVLPFMMAFLLISSLLNFAHI) form a helical membrane-spanning segment. Over 148 to 179 (VKILNDHKMKNDTVWHLNMYKSEYFIKQILLN) the chain is Extracellular. Asn-158 carries N-linked (GlcNAc...) asparagine glycosylation. Residues 180–200 (LGVIFFFTLSLITCVLLIISL) form a helical membrane-spanning segment. Residues 201-227 (WRHNRQMQSNVTGLRDSNTEAHVKAMK) are Cytoplasmic-facing. A helical membrane pass occupies residues 228–248 (VLISFIILFILYFIGMALEIS). At 249–257 (RFTVPENKL) the chain is on the extracellular side. Residues 258–278 (LLMFGMTTTAIYPWGHSFILI) traverse the membrane as a helical segment. At 279 to 308 (LGNSKLKQASLRVLQQLKCCEKRKKSQSHI) the chain is on the cytoplasmic side.

This sequence belongs to the G-protein coupled receptor T2R family.

It localises to the membrane. Receptor that may play a role in the perception of bitterness and is gustducin-linked. May play a role in sensing the chemical composition of the gastrointestinal content. The activity of this receptor may stimulate alpha gustducin, mediate PLC-beta-2 activation and lead to the gating of TRPM5. In Pongo pygmaeus (Bornean orangutan), this protein is Taste receptor type 2 member 10 (TAS2R10).